The chain runs to 192 residues: Interleukin-18 (192 aa).

Residues 1-35 (MAAEPEDNCISFVEMKFINNTLYFVAENDEDLESD) constitute a propeptide that is removed on maturation.

It belongs to the IL-1 family. In terms of assembly, forms a ternary complex with ligand-binding receptor subunit IL18R1 and signaling receptor subunit IL18RAP at the plasma membrane. Mature IL18 first binds to IL18R1 forming a low affinity binary complex, which then interacts with IL18RAP to form a high affinity ternary complex that signals inside the cell. Interacts with cargo receptor TMED10; the interaction mediates the translocation from the cytoplasm into the ERGIC (endoplasmic reticulum-Golgi intermediate compartment) and thereby secretion. The pro-IL-18 precursor is processed by CASP1, CASP4 or CASP5 to yield its mature, active form. The pro-IL-18 precursor features autoinhibitory interactions between the propeptide and the post-cleavage-site region, preventing recognition by the IL18R1 receptor. Processing by CASP1, CASP4 or CASP5 induces conformational changes to generate critical receptor-binding sites. The mature form is then secreted and released in the extracellular milieu by passing through the gasdermin-D (GSDMD) pore. In contrast, cleavage by CASP3 inactivates IL18.

The protein resides in the cytoplasm. It is found in the cytosol. It localises to the secreted. Pro-inflammatory cytokine primarily involved in epithelial barrier repair, polarized T-helper 1 (Th1) cell and natural killer (NK) cell immune responses. Upon binding to IL18R1 and IL18RAP, forms a signaling ternary complex which activates NF-kappa-B, triggering synthesis of inflammatory mediators. Synergizes with IL12/interleukin-12 to induce IFNG synthesis from T-helper 1 (Th1) cells and natural killer (NK) cells. Involved in transduction of inflammation downstream of pyroptosis: its mature form is specifically released in the extracellular milieu by passing through the gasdermin-D (GSDMD) pore. This Sus scrofa (Pig) protein is Interleukin-18 (IL18).